A 130-amino-acid chain; its full sequence is Large ribosomal subunit protein uL14 (130 aa).

It belongs to the universal ribosomal protein uL14 family. As to quaternary structure, part of the 50S ribosomal subunit. Forms a cluster with proteins L3 and L19. In the 70S ribosome, L14 and L19 interact and together make contacts with the 16S rRNA in bridges B5 and B8.

Binds to 23S rRNA. Forms part of two intersubunit bridges in the 70S ribosome. The protein is Large ribosomal subunit protein uL14 of Leptospira biflexa serovar Patoc (strain Patoc 1 / Ames).